Here is a 581-residue protein sequence, read N- to C-terminus: Proline--tRNA ligase (581 aa).

The protein belongs to the class-II aminoacyl-tRNA synthetase family. ProS type 1 subfamily. In terms of assembly, homodimer.

The protein localises to the cytoplasm. It carries out the reaction tRNA(Pro) + L-proline + ATP = L-prolyl-tRNA(Pro) + AMP + diphosphate. Functionally, catalyzes the attachment of proline to tRNA(Pro) in a two-step reaction: proline is first activated by ATP to form Pro-AMP and then transferred to the acceptor end of tRNA(Pro). As ProRS can inadvertently accommodate and process non-cognate amino acids such as alanine and cysteine, to avoid such errors it has two additional distinct editing activities against alanine. One activity is designated as 'pretransfer' editing and involves the tRNA(Pro)-independent hydrolysis of activated Ala-AMP. The other activity is designated 'posttransfer' editing and involves deacylation of mischarged Ala-tRNA(Pro). The misacylated Cys-tRNA(Pro) is not edited by ProRS. The chain is Proline--tRNA ligase from Polaromonas naphthalenivorans (strain CJ2).